The chain runs to 120 residues: Large ribosomal subunit protein bL19c (120 aa).

It belongs to the bacterial ribosomal protein bL19 family.

The protein localises to the plastid. Its subcellular location is the chloroplast. In Trieres chinensis (Marine centric diatom), this protein is Large ribosomal subunit protein bL19c (rpl19).